A 123-amino-acid polypeptide reads, in one-letter code: Ribosome-binding factor A (123 aa).

Belongs to the RbfA family. Monomer. Binds 30S ribosomal subunits, but not 50S ribosomal subunits or 70S ribosomes.

The protein localises to the cytoplasm. Functionally, one of several proteins that assist in the late maturation steps of the functional core of the 30S ribosomal subunit. Associates with free 30S ribosomal subunits (but not with 30S subunits that are part of 70S ribosomes or polysomes). Required for efficient processing of 16S rRNA. May interact with the 5'-terminal helix region of 16S rRNA. The polypeptide is Ribosome-binding factor A (Cupriavidus taiwanensis (strain DSM 17343 / BCRC 17206 / CCUG 44338 / CIP 107171 / LMG 19424 / R1) (Ralstonia taiwanensis (strain LMG 19424))).